The sequence spans 1189 residues: Lysine-specific demethylase hairless (1189 aa).

Disordered regions lie at residues 1 to 40 (MEST…HHGP), 236 to 257 (HLQR…EMGA), 349 to 377 (EGGA…SHHT), 414 to 480 (AGSP…LQDP), and 505 to 552 (GEGG…RLST). Basic and acidic residues predominate over residues 239-254 (RAGEAERPSLHQRDGE). A compositionally biased stretch (basic and acidic residues) spans 457–469 (KDVDSGQHDEQKG). The LXXLL motif 1 motif lies at 566-570 (LCRLL). The C6-type zinc-finger motif lies at 600 to 625 (CSRCHHGLFNTHWRCPRCSHRLCVAC). Residues 702 to 750 (GDAGQQKESTQKTPPTPQPSCNGDTHRTKSIKEETPDSAETPAEDRAGR) form a disordered region. Residues 725-736 (DTHRTKSIKEET) show a composition bias toward basic and acidic residues. Residues 758–762 (LCELL) carry the LXXLL motif 2 motif. A JmjC domain is found at 946-1157 (DTSRVENLAA…LSAQLCHQGP (212 aa)). The Fe cation site is built by C1007, E1009, and H1125.

Requires Fe(2+) as cofactor. In terms of tissue distribution, strongest expression of isoforms 1 and 2 is seen in the small intestine, weaker expression in brain and colon, and trace expression is found in liver, pancreas, spleen, thymus, stomach, salivary gland, appendix and trachea. Isoform 1 is always the most abundant. Isoform 1 is exclusively expressed at low levels in kidney and testis. Isoform 2 is exclusively expressed at high levels in the skin.

Its subcellular location is the nucleus. It catalyses the reaction N(6),N(6)-dimethyl-L-lysyl(9)-[histone H3] + 2 2-oxoglutarate + 2 O2 = L-lysyl(9)-[histone H3] + 2 formaldehyde + 2 succinate + 2 CO2. In terms of biological role, histone demethylase that specifically demethylates both mono- and dimethylated 'Lys-9' of histone H3. May act as a transcription regulator controlling hair biology (via targeting of collagens), neural activity, and cell cycle. This chain is Lysine-specific demethylase hairless (HR), found in Homo sapiens (Human).